The chain runs to 245 residues: tRNA (guanine-N(1)-)-methyltransferase (245 aa).

S-adenosyl-L-methionine-binding positions include Gly-114 and 134–139; that span reads IGDYIL.

This sequence belongs to the RNA methyltransferase TrmD family. As to quaternary structure, homodimer.

It is found in the cytoplasm. It catalyses the reaction guanosine(37) in tRNA + S-adenosyl-L-methionine = N(1)-methylguanosine(37) in tRNA + S-adenosyl-L-homocysteine + H(+). Its function is as follows. Specifically methylates guanosine-37 in various tRNAs. This is tRNA (guanine-N(1)-)-methyltransferase from Listeria welshimeri serovar 6b (strain ATCC 35897 / DSM 20650 / CCUG 15529 / CIP 8149 / NCTC 11857 / SLCC 5334 / V8).